The chain runs to 334 residues: Glutaredoxin-3 (334 aa).

Position 2 is an N-acetylalanine (Ala2). Residues 2-116 (AGGAAEAAAA…LTKKVQRHAS (115 aa)) enclose the Thioredoxin domain. The tract at residues 110–131 (KVQRHASSGSFSPSGSEHPKED) is disordered. Residues Ser116 and Ser119 each carry the phosphoserine modification. Residues 116-125 (SSGSFSPSGS) show a composition bias toward low complexity. 2 consecutive Glutaredoxin domains span residues 145 to 235 (CMLF…PKLE) and 236 to 334 (ERLK…KGEN). The [2Fe-2S] cluster site is built by Cys158 and Cys260.

As to quaternary structure, homodimer; the homodimer is independent of 2Fe-2S clusters. Heterotrimer; forms a heterotrimeric complex composed by two BOLA2 molecules and one GLRX3 molecule; linked by [2Fe-2S] clusters. Interacts (via N-terminus) with PRKCQ/PKC-theta. Interacts (via C-terminus) with CSRP3. Interacts with CSRP2.

The protein resides in the cytoplasm. It is found in the cytosol. Its subcellular location is the cell cortex. It localises to the myofibril. The protein localises to the sarcomere. The protein resides in the z line. Functionally, together with BOLA2, acts as a cytosolic iron-sulfur (Fe-S) cluster assembly factor that facilitates [2Fe-2S] cluster insertion into a subset of cytosolic proteins. Acts as a critical negative regulator of cardiac hypertrophy and a positive inotropic regulator. Required for hemoglobin maturation. Does not possess any thyoredoxin activity since it lacks the conserved motif that is essential for catalytic activity. This is Glutaredoxin-3 (GLRX3) from Bos taurus (Bovine).